The primary structure comprises 257 residues: MGCDVHDPSWQCQWGVPTIIVAWITCAALGIWCLAGSSADVSSGPGIAAVVGCSVFMIFLCAYLIRYREFFKDSVIDLLTCRWVRYCSCSCKCSCKCISGPCSRCCSACYKETMIYDMVQYGHRRRPGHGDDPDRVICEIVESPPVSAPTVFVPPPSEESHQPVIPPQPPTPTSEPKPKKGRAKDKPKGRPKNKPPCEPTVSSQPPSQPTAMPGGPPDASPPAMPQMPPGVAEAVQAAVQAAMAAALQQQQQHQTGT.

Helical transmembrane passes span 14 to 34 (WGVPTIIVAWITCAALGIWCL) and 45 to 65 (PGIAAVVGCSVFMIFLCAYLI). The disordered stretch occupies residues 149–232 (PTVFVPPPSE…AMPQMPPGVA (84 aa)). Positions 164–175 (VIPPQPPTPTSE) are enriched in pro residues. Positions 179–193 (KKGRAKDKPKGRPKN) are enriched in basic residues. Pro residues predominate over residues 214–228 (GGPPDASPPAMPQMP).

It is found in the host Golgi apparatus membrane. This chain is Protein UL133 (UL133), found in Human cytomegalovirus (strain Merlin) (HHV-5).